We begin with the raw amino-acid sequence, 148 residues long: Sec-independent protein translocase protein TatB (148 aa).

The chain crosses the membrane as a helical span at residues 1 to 21; it reads MFGISFSELLLVGLVALLVLG. The interval 85–148 is disordered; the sequence is EPTPVEHVGE…NDTTQPPRAP (64 aa). Low complexity predominate over residues 107–148; sequence APAVAPTESAPVVAPASVEHVAQTAAPTTPAPNDTTQPPRAP.

This sequence belongs to the TatB family. The Tat system comprises two distinct complexes: a TatABC complex, containing multiple copies of TatA, TatB and TatC subunits, and a separate TatA complex, containing only TatA subunits. Substrates initially bind to the TatABC complex, which probably triggers association of the separate TatA complex to form the active translocon.

Its subcellular location is the cell inner membrane. Functionally, part of the twin-arginine translocation (Tat) system that transports large folded proteins containing a characteristic twin-arginine motif in their signal peptide across membranes. Together with TatC, TatB is part of a receptor directly interacting with Tat signal peptides. TatB may form an oligomeric binding site that transiently accommodates folded Tat precursor proteins before their translocation. This Pseudomonas fluorescens (strain Pf0-1) protein is Sec-independent protein translocase protein TatB.